A 180-amino-acid polypeptide reads, in one-letter code: Centromere protein M (180 aa).

In terms of assembly, component of the CENPA-NAC complex, at least composed of CENPA, CENPC, CENPH, CENPM, CENPN, CENPT and CENPU. The CENPA-NAC complex interacts with the CENPA-CAD complex, composed of CENPI, CENPK, CENPL, CENPO, CENPP, CENPQ, CENPR and CENPS. In terms of tissue distribution, isoform 3 is highly expressed in spleen, and intermediately in heart, prostate and ovary. Isoform 3 is highly expressed in resting CD19 B-cells and B-lineage chronic lymphocytic leukemia (B-CLL) cells and weakly expressed in activated B-cells. Isoform 1 is selectively expressed in activated CD19 cells and weakly in resting CD19 B-cells.

The protein resides in the nucleus. It localises to the cytoplasm. Its subcellular location is the chromosome. It is found in the centromere. The protein localises to the kinetochore. Component of the CENPA-NAC (nucleosome-associated) complex, a complex that plays a central role in assembly of kinetochore proteins, mitotic progression and chromosome segregation. The CENPA-NAC complex recruits the CENPA-CAD (nucleosome distal) complex and may be involved in incorporation of newly synthesized CENPA into centromeres. This Homo sapiens (Human) protein is Centromere protein M (CENPM).